A 29-amino-acid polypeptide reads, in one-letter code: Varv peptide D (29 aa).

The cyclopeptide (Gly-Asn) cross-link spans 1–29 (GLPICGETCVGGSCNTPGCSCSWPVCTRN). 3 cysteine pairs are disulfide-bonded: Cys-5/Cys-19, Cys-9/Cys-21, and Cys-14/Cys-26.

Post-translationally, this is a cyclic peptide.

Probably participates in a plant defense mechanism. This Viola arvensis (European field pansy) protein is Varv peptide D.